Here is a 239-residue protein sequence, read N- to C-terminus: EF-hand domain-containing protein D1 (239 aa).

Basic and acidic residues predominate over residues 1-18 (MASEELACKLERRLRREE). Positions 1–53 (MASEELACKLERRLRREEAEESGPQLAPLGAPAPEPKPEPEPPARAPTASADA) are disordered. 2 EF-hand domains span residues 90–125 (RLIK…LGAP) and 126–161 (QTHL…AAAG). Residues aspartate 103, aspartate 107, glutamate 114, aspartate 139, aspartate 141, aspartate 143, lysine 145, and glutamate 150 each coordinate Ca(2+). Serine 201 bears the Phosphoserine mark.

Its subcellular location is the mitochondrion inner membrane. In terms of biological role, acts as a calcium sensor for mitochondrial flash (mitoflash) activation, an event characterized by stochastic bursts of superoxide production. May play a role in neuronal differentiation. The chain is EF-hand domain-containing protein D1 (EFHD1) from Homo sapiens (Human).